The sequence spans 112 residues: uncharacterized protein (112 aa).

2 disordered regions span residues 1–53 (MSKL…QRLK) and 80–112 (MINQ…MLEL). Over residues 8-22 (SALQKLIESQKNPNA) the composition is skewed to polar residues. A compositionally biased stretch (basic residues) spans 86 to 96 (ETKKRKRKQKK). Over residues 101-112 (DYGVFEEDMLEL) the composition is skewed to acidic residues.

The protein resides in the nucleus. Its subcellular location is the nucleolus. This is an uncharacterized protein from Schizosaccharomyces pombe (strain 972 / ATCC 24843) (Fission yeast).